The primary structure comprises 118 residues: Ribonuclease P protein component (118 aa).

This sequence belongs to the RnpA family. Consists of a catalytic RNA component (M1 or rnpB) and a protein subunit.

It carries out the reaction Endonucleolytic cleavage of RNA, removing 5'-extranucleotides from tRNA precursor.. In terms of biological role, RNaseP catalyzes the removal of the 5'-leader sequence from pre-tRNA to produce the mature 5'-terminus. It can also cleave other RNA substrates such as 4.5S RNA. The protein component plays an auxiliary but essential role in vivo by binding to the 5'-leader sequence and broadening the substrate specificity of the ribozyme. The sequence is that of Ribonuclease P protein component from Rickettsia felis (strain ATCC VR-1525 / URRWXCal2) (Rickettsia azadi).